Consider the following 236-residue polypeptide: Small ribosomal subunit protein uS2c (236 aa).

The protein belongs to the universal ribosomal protein uS2 family.

Its subcellular location is the plastid. The protein localises to the chloroplast. This is Small ribosomal subunit protein uS2c (rps2) from Ipomoea purpurea (Common morning glory).